Here is a 768-residue protein sequence, read N- to C-terminus: Degenerin mec-4 (768 aa).

Over methionine 1–alanine 109 the chain is Cytoplasmic. Residues valine 110–leucine 130 traverse the membrane as a helical segment. The Extracellular segment spans residues aspartate 131–glutamine 718. Disordered stretches follow at residues alanine 187–aspartate 221 and glycine 237–threonine 260. The segment covering glycine 189–isoleucine 200 has biased composition (basic and acidic residues). The span at alanine 203–lysine 212 shows a compositional bias: low complexity. Acidic residues predominate over residues glutamate 243–glutamate 252. N-linked (GlcNAc...) asparagine glycans are attached at residues asparagine 336, asparagine 357, asparagine 480, asparagine 484, asparagine 503, and asparagine 671. A helical membrane pass occupies residues leucine 719–glutamate 739. Residues threonine 740–phenylalanine 768 are Cytoplasmic-facing.

It belongs to the amiloride-sensitive sodium channel (TC 1.A.6) family. In terms of assembly, the channel is probably composed of at least the mec-2, mec-4, mec-6 and mec-10 subunits.

The protein localises to the membrane. In terms of biological role, probable sodium channel subunit. May be needed for mechanosensory transduction (touch sensitivity). Negatively regulates the turning step of male mating behavior. The sequence is that of Degenerin mec-4 (mec-4) from Caenorhabditis briggsae.